A 142-amino-acid polypeptide reads, in one-letter code: Galactose-6-phosphate isomerase subunit LacA (142 aa).

This sequence belongs to the LacAB/RpiB family. As to quaternary structure, heteromultimeric protein consisting of LacA and LacB.

It catalyses the reaction aldehydo-D-galactose 6-phosphate = keto-D-tagatose 6-phosphate. It functions in the pathway carbohydrate metabolism; D-galactose 6-phosphate degradation; D-tagatose 6-phosphate from D-galactose 6-phosphate: step 1/1. The polypeptide is Galactose-6-phosphate isomerase subunit LacA (Clostridium acetobutylicum (strain ATCC 824 / DSM 792 / JCM 1419 / IAM 19013 / LMG 5710 / NBRC 13948 / NRRL B-527 / VKM B-1787 / 2291 / W)).